The chain runs to 862 residues: Taxadiene synthase (862 aa).

Residues 45-66 (RVKMSRGSGGPGPVVMMSSSTG) form a disordered region. Mg(2+) is bound by residues D613, D617, N757, T761, and E765. The DDXXD motif motif lies at 613–617 (DDMAD).

Belongs to the terpene synthase family. Mg(2+) is required as a cofactor.

It carries out the reaction (2E,6E,10E)-geranylgeranyl diphosphate = taxa-4(5),11(12)-diene + diphosphate. The protein operates within alkaloid biosynthesis; taxol biosynthesis; taxa-4(20),11-dien-5alpha-ol from geranylgeranyl diphosphate: step 1/2. In terms of biological role, catalyzes the cyclization of the ubiquitous isoprenoid intermediate geranylgeranyl diphosphate to taxa-4,11-diene, the parent olefin with a taxane skeleton. The sequence is that of Taxadiene synthase (TDC1) from Taxus chinensis (Chinese yew).